Here is a 113-residue protein sequence, read N- to C-terminus: Large ribosomal subunit protein P1z (113 aa).

The interval 87-113 (AAAPAKEEKKDEPAEESDGDLGFGLFD) is disordered. Residue serine 103 is modified to Phosphoserine.

The protein belongs to the eukaryotic ribosomal protein P1/P2 family. In terms of assembly, P1 and P2 exist as dimers at the large ribosomal subunit.

Plays an important role in the elongation step of protein synthesis. This chain is Large ribosomal subunit protein P1z (RPP1B), found in Arabidopsis thaliana (Mouse-ear cress).